Here is a 257-residue protein sequence, read N- to C-terminus: Kallikrein-1 (257 aa).

The signal sequence occupies residues 1–18; the sequence is MWFLVLCLALSLGGTGRA. The propeptide at 19–24 is activation peptide; that stretch reads PPIQSR. Residues 25–254 form the Peptidase S1 domain; sequence IVGGWECSQP…YVKWIEDTIA (230 aa). 5 disulfide bridges follow: C31/C169, C47/C63, C148/C215, C180/C194, and C205/C230. H62 serves as the catalytic Charge relay system. An O-linked (GalNAc...) serine glycan is attached at S90. N99 carries an N-linked (GlcNAc...) asparagine glycan. S101 is a glycosylation site (O-linked (GalNAc...) serine). N-linked (GlcNAc...) asparagine glycosylation is present at N105. D116 acts as the Charge relay system in catalysis. N160 carries N-linked (GlcNAc...) asparagine glycosylation. S162 carries an O-linked (GalNAc...) serine glycan. Catalysis depends on S209, which acts as the Charge relay system.

The protein belongs to the peptidase S1 family. Kallikrein subfamily.

The catalysed reaction is Preferential cleavage of Arg-|-Xaa bonds in small molecule substrates. Highly selective action to release kallidin (lysyl-bradykinin) from kininogen involves hydrolysis of Met-|-Xaa or Leu-|-Xaa.. Its function is as follows. Glandular kallikreins cleave Met-Lys and Arg-Ser bonds in kininogen to release Lys-bradykinin. This is Kallikrein-1 (KLK1) from Macaca fascicularis (Crab-eating macaque).